A 266-amino-acid polypeptide reads, in one-letter code: Glucosamine-6-phosphate deaminase (266 aa).

Aspartate 72 acts as the Proton acceptor; for enolization step in catalysis. Aspartate 141 acts as the For ring-opening step in catalysis. The Proton acceptor; for ring-opening step role is filled by histidine 143. Glutamate 148 acts as the For ring-opening step in catalysis.

This sequence belongs to the glucosamine/galactosamine-6-phosphate isomerase family. NagB subfamily. Homohexamer.

The enzyme catalyses alpha-D-glucosamine 6-phosphate + H2O = beta-D-fructose 6-phosphate + NH4(+). The protein operates within amino-sugar metabolism; N-acetylneuraminate degradation; D-fructose 6-phosphate from N-acetylneuraminate: step 5/5. Its activity is regulated as follows. Allosterically activated by N-acetylglucosamine 6-phosphate (GlcNAc6P). In terms of biological role, catalyzes the reversible isomerization-deamination of glucosamine 6-phosphate (GlcN6P) to form fructose 6-phosphate (Fru6P) and ammonium ion. In Cronobacter sakazakii (strain ATCC BAA-894) (Enterobacter sakazakii), this protein is Glucosamine-6-phosphate deaminase.